Here is a 536-residue protein sequence, read N- to C-terminus: MELSLSFPVSWLCALFTAIALYCIAVAFYRLFLHPLAKFPGPFLWKISIWPTVWQCAHGKRHLDLLAAHKRHGPVVRIGPNMLSYNTGSAARTIYASRHANVRKSDFHLTVDASVSAPSLFSIVDREKHAFRRRVVSQAFTEKAMMDASEFYLKYMKVFLDVLHDKVGTGWTKVDIQEHATWWTSDTMGDLSLGRSFNCLTEPTFRHAIPMMRNGLRYIYWAGHLPFRDLVDYILAHPILSRYGGQSAVDNRNYFDFCETAIQERIKEEQDALAAGADEESRRKDYIHYLLAAVDPETGEKLTKNELESDASLLLAAGGDAMSNAIAGIMFYLARHDFARDRATAEIRHQFASAEDIRQGPGLAACTYLEACILESMRMAPPVATSPLERVTVGNGIEVDGHWFPAGITLGVCFYALNFNETIHKDPYRFRPERWLSSEEGITAEDVQQSKSNFFPFSAGHRHCPARNLASRNLKVFIANMLWHFDLRPATSLGVNESSGEEGQTGLFCIEDALISIADGPVLEFKARLGYNASSS.

A helical transmembrane segment spans residues 9 to 29 (VSWLCALFTAIALYCIAVAFY). Cysteine 464 is a binding site for heme.

The protein belongs to the cytochrome P450 family. Requires heme as cofactor.

It localises to the membrane. It participates in secondary metabolite biosynthesis. Functionally, cytochrome P450 monooxygenase; part of the fragmented gene cluster that mediates the biosynthesis of fusarochromene, a tryptophan-derived metabolite closely related to a group of mycotoxins including fusarochromanone. Within the pathway, fscF catalyzes the epoxidation of desacetylfusarochromene which opens the way to the production of fusarochromanones. The first step of the pathway is the epimerization of L-tryptophan to D-tryptophan in the presence of the NRPS-like tryptophan epimerase fscC. D-tryptophan is subsequently hydroxylated by the tryptophan 6-hydroxylase fscE to yield 6-hydroxytryptophan. The pyrrole ring undergoes cleavaged by the tryptophan 2,3-dioxygenase fscD and is finally converted to 4-hydroxykyrunenine by the hydrolase fscH. The NRPS-like oxidoreductase fscA reduces the carboxyl group to primary alcohol and the DMATS-type prenyltransferase fscG performs prenylation, followed by the formation of a chromene ring catalyzed by the oxidoreductase fscI, which leads to desacetylfusarochromene. Epoxidation by fscF and rearrangement reactions of chromene double bonds convert compound desacetylfusarochromene to fusarochromanones. Although specific acetyltransferases were not found near the fsc gene cluster, several predicted enzymes containing the N-acetyltransferase superfamily domain are present in the genome of F.equiseti. These predicted enzymes may have the potential to convert desacetylfusarochromene to fusarochromene. In Fusarium equiseti (Fusarium scirpi), this protein is Cytochrome P450 monooxygenase fscF.